Reading from the N-terminus, the 179-residue chain is MSAESAAIVQPIALIPATKTARQARIAALLTAQSVRSQAELAALLADDGVQVTQATLSRDLVELGAVRVRADGGLVYAVPQAGVDRTPHAAVSKEYLDARMTRLCAELLVTAEASANLVVLRTPPGAANFLAMAIDHSVLPDILGTIAGDDTVLVIARDPFGGAAIAERFLQFAEEPGT.

It belongs to the ArgR family.

It localises to the cytoplasm. Its pathway is amino-acid biosynthesis; L-arginine biosynthesis [regulation]. In terms of biological role, regulates arginine biosynthesis genes. This is Arginine repressor from Renibacterium salmoninarum (strain ATCC 33209 / DSM 20767 / JCM 11484 / NBRC 15589 / NCIMB 2235).